The sequence spans 462 residues: Ubiquitin carboxyl-terminal hydrolase calypso (462 aa).

The region spanning 29–260 is the UCH catalytic domain; sequence GWLELESDPG…IRFNLMAVVP (232 aa). C115 acts as the Nucleophile in catalysis. The active-site Proton donor is H197. One can recognise a ULD domain in the interval 357-385; the sequence is NYDKFICTFLTMLAHQGVLGELVSQHLLP. Residues 387–462 form a positively charged C-terminal tail required for binding nucleosomes region; it reads KKISGQSAAN…KGRNKCRKRK (76 aa). Residues 394-462 are disordered; sequence AANRLNKQNS…KGRNKCRKRK (69 aa). Residues 399–447 show a composition bias toward low complexity; it reads NKQNSAAASTANSSAGATAGGAKSQQQQQQQQQPQQPQTPKNGKSPGKT. Basic residues predominate over residues 448–462; it reads PGRRRKGRNKCRKRK.

The protein belongs to the peptidase C12 family. BAP1 subfamily. In terms of assembly, catalytic component of the polycomb repressive deubiquitinase (PR-DUB) complex, at least composed of caly/calypso, Asx and sba (MBD5/6 homolog). The PR-DUB complex associates with nucleosomes to mediate deubiquitination of histone H2AK118ub1 substrates; the association requires the positively charged C-terminal tail of caly, probably due to direct binding of DNA. Interacts (via ULD domain) with Asx (via DEUBAD domain); the interaction produces a stable heterodimer with a composite binding site for ubiquitin. Homodimerizes (via coiled-coil hinge-region between the UCH and ULD domains) to mediate assembly of 2 copies of the caly-Asx heterodimer into a bisymmetric tetramer; dimerization enhances PR-DUB association with nucleosomes.

It localises to the nucleus. The enzyme catalyses Thiol-dependent hydrolysis of ester, thioester, amide, peptide and isopeptide bonds formed by the C-terminal Gly of ubiquitin (a 76-residue protein attached to proteins as an intracellular targeting signal).. Catalytic component of the polycomb repressive deubiquitinase (PR-DUB) complex, a complex that specifically mediates deubiquitination of histone H2A monoubiquitinated at 'Lys-119' (H2AK118ub1). Mediates bisymmetric organization of the PR-DUB complex and is involved in association with nucleosomes to mediate deubiquitination. Does not deubiquitinate monoubiquitinated histone H2B. Required to maintain the transcriptionally repressive state of homeotic genes throughout development. The PR-DUB complex has weak or no activity toward 'Lys-48'- and 'Lys-63'-linked polyubiquitin chains. Polycomb group (PcG) protein. The sequence is that of Ubiquitin carboxyl-terminal hydrolase calypso from Drosophila virilis (Fruit fly).